We begin with the raw amino-acid sequence, 142 residues long: Large ribosomal subunit protein uL22c (142 aa).

The protein belongs to the universal ribosomal protein uL22 family. As to quaternary structure, part of the 50S ribosomal subunit.

It localises to the plastid. Its subcellular location is the chloroplast. In terms of biological role, this protein binds specifically to 23S rRNA. The globular domain of the protein is located near the polypeptide exit tunnel on the outside of the subunit, while an extended beta-hairpin is found that lines the wall of the exit tunnel in the center of the 70S ribosome. The sequence is that of Large ribosomal subunit protein uL22c (rpl22) from Ceratophyllum demersum (Rigid hornwort).